We begin with the raw amino-acid sequence, 421 residues long: Membrane-associated protein UidC (421 aa).

The first 23 residues, 1–23 (MRKIVAMAVICLTAASGLTSAYA), serve as a signal peptide directing secretion.

Belongs to the outer membrane porin (Opr) (TC 1.B.25) family.

The protein resides in the cell outer membrane. Functionally, enhances the activity of the UidB (GusB) glucuronide transporter, on its own however it has no transport activity. Glucuronide transport does not occur in strain K12 due to a variant at position 100 of the UidB (GusB, AC P0CE44, AC P0CE45) protein. The sequence is that of Membrane-associated protein UidC (uidC) from Escherichia coli (strain K12).